A 228-amino-acid polypeptide reads, in one-letter code: Urease accessory protein UreF (228 aa).

The protein belongs to the UreF family. UreD, UreF and UreG form a complex that acts as a GTP-hydrolysis-dependent molecular chaperone, activating the urease apoprotein by helping to assemble the nickel containing metallocenter of UreC. The UreE protein probably delivers the nickel.

Its subcellular location is the cytoplasm. In terms of biological role, required for maturation of urease via the functional incorporation of the urease nickel metallocenter. In Prochlorococcus marinus (strain MIT 9301), this protein is Urease accessory protein UreF.